Here is a 101-residue protein sequence, read N- to C-terminus: NAD(P)H-quinone oxidoreductase subunit 4L, chloroplastic (101 aa).

3 consecutive transmembrane segments (helical) span residues 2–22 (MLEH…YGLI), 27–46 (MVRA…MNLI), and 61–81 (IFSI…PAIV).

The protein belongs to the complex I subunit 4L family. NDH is composed of at least 16 different subunits, 5 of which are encoded in the nucleus.

It localises to the plastid. Its subcellular location is the chloroplast thylakoid membrane. The enzyme catalyses a plastoquinone + NADH + (n+1) H(+)(in) = a plastoquinol + NAD(+) + n H(+)(out). The catalysed reaction is a plastoquinone + NADPH + (n+1) H(+)(in) = a plastoquinol + NADP(+) + n H(+)(out). NDH shuttles electrons from NAD(P)H:plastoquinone, via FMN and iron-sulfur (Fe-S) centers, to quinones in the photosynthetic chain and possibly in a chloroplast respiratory chain. The immediate electron acceptor for the enzyme in this species is believed to be plastoquinone. Couples the redox reaction to proton translocation, and thus conserves the redox energy in a proton gradient. This Drimys granadensis protein is NAD(P)H-quinone oxidoreductase subunit 4L, chloroplastic.